The sequence spans 366 residues: Cyclin-O protein A (366 aa).

Disordered regions lie at residues 18–55 and 80–99; these read AAFS…GIKK and YETP…PYDS.

The protein belongs to the cyclin family.

It localises to the cytoplasm. Its function is as follows. Specifically required for generation of multiciliated cells, possibly by promoting a cell cycle state compatible with centriole amplification and maturation. Acts downstream of mcidas to promote mother centriole amplification and maturation in preparation for apical docking. The chain is Cyclin-O protein A (ccno-a) from Xenopus laevis (African clawed frog).